Consider the following 229-residue polypeptide: Cytochrome b6-f complex iron-sulfur subunit, chloroplastic (229 aa).

The transit peptide at 1-50 (MASSSLSPATQLGSSRSALMAMSSGLFVKPTKMNHQMVRKEKIGLRISCQ) directs the protein to the chloroplast. The chain crosses the membrane as a helical span at residues 68-90 (LNLLLLGALSLPTGYMLVPYATF). In terms of domain architecture, Rieske spans 115 to 211 (AAEWLKTHGP…ADIDEAGKVL (97 aa)). [2Fe-2S] cluster is bound by residues cysteine 157, histidine 159, cysteine 175, and histidine 178. A disulfide bridge connects residues cysteine 162 and cysteine 177. Serine 196 is subject to Phosphoserine.

This sequence belongs to the Rieske iron-sulfur protein family. As to quaternary structure, the 4 large subunits of the cytochrome b6-f complex are cytochrome b6, subunit IV (17 kDa polypeptide, petD), cytochrome f and the Rieske protein, while the 4 small subunits are petG, petL, petM and petN. The complex functions as a dimer. Interacts with PGRL1A. Component of a mitochondrial large protein complex that contains, at least, MIC60, DGS1, TOM40, TOM20 proteins, and petC/RISP. [2Fe-2S] cluster serves as cofactor. Confined to photosynthetic tissues, with highest levels in flowers. In leaves, mostly localized in mesophyll cells. In stems, confined to the peripheral ring of chlorenchyma and adjoining groups of cells associated with the vascular bundles. In siliques, present in green wall of the fruit and in peduncle but not in the translucide white septum of the seeds.

The protein resides in the plastid. Its subcellular location is the chloroplast thylakoid membrane. The protein localises to the mitochondrion inner membrane. The catalysed reaction is 2 oxidized [plastocyanin] + a plastoquinol + 2 H(+)(in) = 2 reduced [plastocyanin] + a plastoquinone + 4 H(+)(out). Functionally, essential protein for photoautotrophism. Confers resistance to photo-oxidative damages by contributing to the thermal dissipation of light energy and to lumenal acidification (increase of pH gradient). Component of the cytochrome b6-f complex, which mediates electron transfer between photosystem II (PSII) and photosystem I (PSI), cyclic electron flow around PSI, and state transitions. This chain is Cytochrome b6-f complex iron-sulfur subunit, chloroplastic, found in Arabidopsis thaliana (Mouse-ear cress).